A 343-amino-acid polypeptide reads, in one-letter code: Methionine import ATP-binding protein MetN (343 aa).

Residues 2–241 (IKLSNITKVF…PKTPLAQKFI (240 aa)) form the ABC transporter domain. Residue 38-45 (GASGAGKS) coordinates ATP.

This sequence belongs to the ABC transporter superfamily. Methionine importer (TC 3.A.1.24) family. The complex is composed of two ATP-binding proteins (MetN), two transmembrane proteins (MetI) and a solute-binding protein (MetQ).

Its subcellular location is the cell inner membrane. It carries out the reaction L-methionine(out) + ATP + H2O = L-methionine(in) + ADP + phosphate + H(+). It catalyses the reaction D-methionine(out) + ATP + H2O = D-methionine(in) + ADP + phosphate + H(+). Its function is as follows. Part of the ABC transporter complex MetNIQ involved in methionine import. Responsible for energy coupling to the transport system. The sequence is that of Methionine import ATP-binding protein MetN from Escherichia coli O157:H7.